Reading from the N-terminus, the 371-residue chain is 4-hydroxy-3-methylbut-2-en-1-yl diphosphate synthase (flavodoxin) (371 aa).

[4Fe-4S] cluster is bound by residues C271, C274, C306, and E313.

It belongs to the IspG family. The cofactor is [4Fe-4S] cluster.

The enzyme catalyses (2E)-4-hydroxy-3-methylbut-2-enyl diphosphate + oxidized [flavodoxin] + H2O + 2 H(+) = 2-C-methyl-D-erythritol 2,4-cyclic diphosphate + reduced [flavodoxin]. It participates in isoprenoid biosynthesis; isopentenyl diphosphate biosynthesis via DXP pathway; isopentenyl diphosphate from 1-deoxy-D-xylulose 5-phosphate: step 5/6. Converts 2C-methyl-D-erythritol 2,4-cyclodiphosphate (ME-2,4cPP) into 1-hydroxy-2-methyl-2-(E)-butenyl 4-diphosphate. This chain is 4-hydroxy-3-methylbut-2-en-1-yl diphosphate synthase (flavodoxin), found in Actinobacillus succinogenes (strain ATCC 55618 / DSM 22257 / CCUG 43843 / 130Z).